Reading from the N-terminus, the 176-residue chain is Neuropeptide-like protein 1 (176 aa).

The signal sequence occupies residues 1 to 19 (MKATFVLACLLVIAAVSHA). The tract at residues 59–79 (GKRSAEQNEQANKEDKATSDK) is disordered. Over residues 61–79 (RSAEQNEQANKEDKATSDK) the composition is skewed to basic and acidic residues.

Its function is as follows. In AWC olfactory sensory neurons, required for the detection of preferred food sources. The sequence is that of Neuropeptide-like protein 1 (nlp-1) from Caenorhabditis elegans.